Consider the following 269-residue polypeptide: Regulatory protein RecX (269 aa).

The protein belongs to the RecX family.

It is found in the cytoplasm. Modulates RecA activity. In Geobacillus kaustophilus (strain HTA426), this protein is Regulatory protein RecX.